The following is a 207-amino-acid chain: Glycerol-3-phosphate acyltransferase (207 aa).

5 helical membrane-spanning segments follow: residues 4–24 (VVAT…SFAV), 58–78 (ILTL…AQWL), 86–106 (ETGI…PVFH), 120–140 (ILLA…LIIA), and 162–182 (VLMN…VLLI).

The protein belongs to the PlsY family. As to quaternary structure, probably interacts with PlsX.

The protein resides in the cell inner membrane. It carries out the reaction an acyl phosphate + sn-glycerol 3-phosphate = a 1-acyl-sn-glycero-3-phosphate + phosphate. Its pathway is lipid metabolism; phospholipid metabolism. Functionally, catalyzes the transfer of an acyl group from acyl-phosphate (acyl-PO(4)) to glycerol-3-phosphate (G3P) to form lysophosphatidic acid (LPA). This enzyme utilizes acyl-phosphate as fatty acyl donor, but not acyl-CoA or acyl-ACP. The protein is Glycerol-3-phosphate acyltransferase of Ralstonia pickettii (strain 12J).